The chain runs to 441 residues: Histidinol dehydrogenase (441 aa).

Positions 136, 197, and 220 each coordinate NAD(+). 3 residues coordinate substrate: S243, Q265, and H268. 2 residues coordinate Zn(2+): Q265 and H268. Residues E333 and H334 each act as proton acceptor in the active site. The substrate site is built by H334, D367, E421, and H426. D367 serves as a coordination point for Zn(2+). A Zn(2+)-binding site is contributed by H426.

It belongs to the histidinol dehydrogenase family. Zn(2+) serves as cofactor.

The catalysed reaction is L-histidinol + 2 NAD(+) + H2O = L-histidine + 2 NADH + 3 H(+). It participates in amino-acid biosynthesis; L-histidine biosynthesis; L-histidine from 5-phospho-alpha-D-ribose 1-diphosphate: step 9/9. Functionally, catalyzes the sequential NAD-dependent oxidations of L-histidinol to L-histidinaldehyde and then to L-histidine. The protein is Histidinol dehydrogenase of Pseudomonas putida (strain ATCC 47054 / DSM 6125 / CFBP 8728 / NCIMB 11950 / KT2440).